A 117-amino-acid polypeptide reads, in one-letter code: Mediator of RNA polymerase II transcription subunit 11 (117 aa).

The residue at position 2 (Ala2) is an N-acetylalanine.

Belongs to the Mediator complex subunit 11 family. As to quaternary structure, component of the Mediator complex, which is composed of MED1, MED4, MED6, MED7, MED8, MED9, MED10, MED11, MED12, MED13, MED13L, MED14, MED15, MED16, MED17, MED18, MED19, MED20, MED21, MED22, MED23, MED24, MED25, MED26, MED27, MED29, MED30, MED31, CCNC, CDK8 and CDC2L6/CDK11. The MED12, MED13, CCNC and CDK8 subunits form a distinct module termed the CDK8 module. Mediator containing the CDK8 module is less active than Mediator lacking this module in supporting transcriptional activation. Individual preparations of the Mediator complex lacking one or more distinct subunits have been variously termed ARC, CRSP, DRIP, PC2, SMCC and TRAP.

The protein localises to the nucleus. In terms of biological role, component of the Mediator complex, a coactivator involved in the regulated transcription of nearly all RNA polymerase II-dependent genes. Mediator functions as a bridge to convey information from gene-specific regulatory proteins to the basal RNA polymerase II transcription machinery. Mediator is recruited to promoters by direct interactions with regulatory proteins and serves as a scaffold for the assembly of a functional pre-initiation complex with RNA polymerase II and the general transcription factors. This is Mediator of RNA polymerase II transcription subunit 11 (MED11) from Bos taurus (Bovine).